A 684-amino-acid polypeptide reads, in one-letter code: Soluble guanylate cyclase gcy-32 (684 aa).

H105 lines the heme pocket. The stretch at 396–432 (DVEVNLQLEANNEQLETMTRELELERQKTDSILKDML) forms a coiled coil. The Guanylate cyclase domain maps to 454 to 582 (TVMFCDLPAF…ETVTLASQME (129 aa)). Residues D459 and D503 each coordinate Mg(2+).

Belongs to the adenylyl cyclase class-4/guanylyl cyclase family. Heterodimer; with other soluble guanylate cyclases. Heme is required as a cofactor. Expressed in a small number of neurons, corresponding to URX, AQR and PQR neurons.

It is found in the cytoplasm. It carries out the reaction GTP = 3',5'-cyclic GMP + diphosphate. With respect to regulation, may be regulated by molecular oxygen. Probably not activated by nitric oxide (NO). In terms of biological role, synthesizes cyclic GMP (cGMP) from GTP. Influences aerotaxis responses, aggregation and bordering behaviors (gathering around the edge of a bacterial lawn) in combination with other soluble guanylate cyclases. This Caenorhabditis elegans protein is Soluble guanylate cyclase gcy-32 (gcy-32).